The following is a 561-amino-acid chain: Efflux pump bfoC (561 aa).

Residues 1–55 (MSDTARILGGPSASSSRDGGMELNSFTEVSQTNSRSHSTKEEEGQVDDQQRPARE) are disordered. The segment covering 24–36 (NSFTEVSQTNSRS) has biased composition (polar residues). A compositionally biased stretch (basic and acidic residues) spans 38-55 (STKEEEGQVDDQQRPARE). A run of 13 helical transmembrane segments spans residues 59-79 (GVLGGYKLVLVTIGLCFCIFC), 103-123 (DVGWYASAYLLTTCAVTLTFG), 128-148 (FFPIKWVYLSALLIFELGSFI), 164-184 (VAGLGGGGLLSGSLLIISQCV), 194-214 (GFIMSIFAVASVIAPLMGGAF), 222-242 (WCFYINLPFGLVSAVVILFTF), 257-277 (AVGLDPLGTATFLPGIVCLLL), 293-313 (VVALFVLFGVLLVCFIGLQLW), 335-355 (LYGFCLNGAMFTFVYYLPIWF), 378-398 (VVFAIISGVLVSMTGYLGPFM), 425-445 (IGYQVLLGLSIGVGFQVPIFV), 457-477 (TATALMTFIQLLGGAIFVSVA), and 530-550 (VHTFYLAIGLAAASFLAATVI).

The protein belongs to the major facilitator superfamily. TCR/Tet family.

It is found in the cell membrane. Its function is as follows. Efflux pump; part of the gene cluster that mediates the biosynthesis of bifonsecin B, a dimeric gamma-naphthopyrone. This Aspergillus brasiliensis (strain CBS 101740 / IMI 381727 / IBT 21946) protein is Efflux pump bfoC.